We begin with the raw amino-acid sequence, 520 residues long: Intermediate filament protein ON3 (520 aa).

The span at Met-1–Ser-27 shows a compositional bias: low complexity. Residues Met-1–Val-33 form a disordered region. A head region spans residues Met-1–Gln-108. Residues Glu-109 to Leu-144 form a coil 1A region. In terms of domain architecture, IF rod spans Glu-109–Leu-420. The interval Gln-145–Met-157 is linker 1. The coil 1B stretch occupies residues Phe-158–Leu-253. Positions Gln-254–Asp-273 are linker 12. The interval Met-274 to Leu-420 is coil 2. Positions Leu-421–Asp-520 are tail.

It belongs to the intermediate filament family.

In terms of biological role, one of the non-neuronal predominant intermediate filament proteins of the visual pathway. The polypeptide is Intermediate filament protein ON3 (Carassius auratus (Goldfish)).